A 210-amino-acid polypeptide reads, in one-letter code: MEKSEATTIDVAETSRESKGKAPLLRDPPAWVPAAVERQRAAPAYKRGVAIFDLILRISAATAALAATITMGTTEQTLPFFTQFFQFQASYDDLPTFTFFVIAMSIVTGYLVLSVPFSIVCIARPVAAAPRLLLILCDTLAVTLNTSAAGASAAIVYLAHNGNSDANWLAICQQFNDFCQRTSGAVVASFVAVVLLIFLVVLSASALKKH.

Positions 1 to 25 are disordered; sequence MEKSEATTIDVAETSRESKGKAPLL. The Cytoplasmic portion of the chain corresponds to 1–48; that stretch reads MEKSEATTIDVAETSRESKGKAPLLRDPPAWVPAAVERQRAAPAYKRG. A helical membrane pass occupies residues 49–69; that stretch reads VAIFDLILRISAATAALAATI. At 70–98 the chain is on the extracellular side; sequence TMGTTEQTLPFFTQFFQFQASYDDLPTFT. A helical transmembrane segment spans residues 99–119; it reads FFVIAMSIVTGYLVLSVPFSI. Residues 120–138 are Cytoplasmic-facing; the sequence is VCIARPVAAAPRLLLILCD. A helical membrane pass occupies residues 139–159; the sequence is TLAVTLNTSAAGASAAIVYLA. At 160–183 the chain is on the extracellular side; the sequence is HNGNSDANWLAICQQFNDFCQRTS. The chain crosses the membrane as a helical span at residues 184–204; it reads GAVVASFVAVVLLIFLVVLSA. The Cytoplasmic portion of the chain corresponds to 205 to 210; the sequence is SALKKH.

The protein belongs to the Casparian strip membrane proteins (CASP) family. As to quaternary structure, homodimer and heterodimers.

It localises to the cell membrane. In terms of biological role, regulates membrane-cell wall junctions and localized cell wall deposition. Required for establishment of the Casparian strip membrane domain (CSD) and the subsequent formation of Casparian strips, a cell wall modification of the root endodermis that determines an apoplastic barrier between the intraorganismal apoplasm and the extraorganismal apoplasm and prevents lateral diffusion. The protein is Casparian strip membrane protein 1 of Erythranthe guttata (Yellow monkey flower).